The chain runs to 623 residues: MHPGNVWGGSLDAVDSDRIAAEEEERLRNTTEWDRGAIHSQRSELDETQQGWLLAPQDNWRKKKKKYVNLGCVSVSRTVFLWTVGSIAVLFLVVALPIIIVKSLPRHKSAPPPPDNYTLALHKALQFFDAQKSGKLPKKNKVSWRGDSGTKDGLPDVVGGLVGGYYDGGSNVKFHFPMAFSMTMLSWSLIEYSHKYKAIDEYDHMRDVLKWGTDYLLLTFNNSATRLDHIYTQVGGGLRDSESPDDIYCWQKPEDMSYDRPVLSSTSAADLGAEVSAALAAASIVFTDKPDYAKKLKKGAETLYPFFRSKSRRKRYSDGQPTAQAFYNSTSMFDEFMWAGAWLYYATGNKTYIQFATTPSVPQTAKAFANRPELMVPSWNNKLPGAMLLMTRYRLFLNPGFPYENMLNRYHNATGITMCAYLKQYNVFNRTSGGLMQLNLGKPRPLEYVAHASFLASLFADYLNSTGVPGWYCGPTFVENHVLKDFAQSQIDYILGDNPLKMSYVVGFGKKFPRRVHHRGATIPNDKKRRSCREGLKYRDTKNPNPNNITGAMVGGPNKFDEFHDLRNNYNASEPTLSGNAGLVAALVSLTSSGGQQIDKNTMFNSVPPLYSPTPPPPKAWKP.

Over 1-79 (MHPGNVWGGS…LGCVSVSRTV (79 aa)) the chain is Cytoplasmic. Residues 80-100 (FLWTVGSIAVLFLVVALPIII) traverse the membrane as a helical; Signal-anchor for type II membrane protein segment. Over 101–623 (VKSLPRHKSA…TPPPPKAWKP (523 aa)) the chain is Extracellular. Residues N116, N221, N328, N349, N412, N429, and N464 are each glycosylated (N-linked (GlcNAc...) asparagine). H517 is an active-site residue. Residue N548 is glycosylated (N-linked (GlcNAc...) asparagine). D565 is an active-site residue. N571 carries N-linked (GlcNAc...) asparagine glycosylation. E574 is an active-site residue.

It belongs to the glycosyl hydrolase 9 (cellulase E) family. Expressed in basal region of leaf blade and proximal parts of leaf and floral organ.

The protein localises to the membrane. The enzyme catalyses Endohydrolysis of (1-&gt;4)-beta-D-glucosidic linkages in cellulose, lichenin and cereal beta-D-glucans.. This is Endoglucanase 7 (KOR2) from Arabidopsis thaliana (Mouse-ear cress).